Reading from the N-terminus, the 654-residue chain is Broad substrate specificity ATP-binding cassette transporter ABCG2 (654 aa).

The Cytoplasmic portion of the chain corresponds to 1–394 (MSSSNVEVFI…KNLLGNPQAS (394 aa)). In terms of domain architecture, ABC transporter spans 37–286 (LSFHNICYRV…FESAGYHCEA (250 aa)). ATP contacts are provided by residues 80–87 (GPTGGGKS), 184–190 (RGVSGGE), Glu211, and His243. Positions 388-650 (LGNPQASIAQ…TIAYLKLLFL (263 aa)) constitute an ABC transmembrane type-2 domain. Residues 395-415 (IAQIIVTVILGLVIGAIYFGL) traverse the membrane as a helical segment. Residues 416 to 427 (NNDSTGIQNRAG) are Extracellular-facing. Asn417 carries N-linked (GlcNAc...) asparagine glycosylation. The chain crosses the membrane as a helical span at residues 428–448 (VLFFLTTNQCFSSVSAVELFV). Residues 449–476 (VEKKLFIHEYISGYYRVSSYFFGKLLSD) lie on the Cytoplasmic side of the membrane. A helical membrane pass occupies residues 477–497 (LLPMRMLPSIIFTCIVYFMLG). Residues 498 to 505 (LKPTADAF) lie on the Extracellular side of the membrane. The helical transmembrane segment at 506–526 (FIMMFTLMMVAYSASSMALAI) threads the bilayer. At 527–534 (AAGQSVVS) the chain is on the cytoplasmic side. A helical transmembrane segment spans residues 535–555 (VATLLMTICFVFMMIFSGLLV). N-linked (GlcNAc...) asparagine glycosylation is found at Asn556, Asn595, and Asn599. Residues 556–629 (NLTTIASWLS…LSPWGLWKNH (74 aa)) are Extracellular-facing. A disulfide bridge connects residues Cys591 and Cys607. The chain crosses the membrane as a helical span at residues 630-650 (VALACMIVIFLTIAYLKLLFL). Over 651–654 (KKYS) the chain is Cytoplasmic.

Belongs to the ABC transporter superfamily. ABCG family. Eye pigment precursor importer (TC 3.A.1.204) subfamily. Homodimer; disulfide-linked. The minimal functional unit is a homodimer, but the major oligomeric form in plasma membrane is a homotetramer with possibility of higher order oligomerization up to homododecamers. Post-translationally, N-glycosylated. Glycosylation-deficient ABCG2 is normally expressed and functional. Phosphorylated. Phosphorylation may regulate the localization to the plasma membrane, the homooligomerization and therefore, the activity of the transporter.

Its subcellular location is the cell membrane. It is found in the apical cell membrane. The protein localises to the mitochondrion membrane. It carries out the reaction ATP + H2O + xenobioticSide 1 = ADP + phosphate + xenobioticSide 2.. The enzyme catalyses urate(in) + ATP + H2O = urate(out) + ADP + phosphate + H(+). It catalyses the reaction indoxyl sulfate(in) + ATP + H2O = indoxyl sulfate(out) + ADP + phosphate + H(+). The catalysed reaction is sphing-4-enine 1-phosphate(in) + ATP + H2O = sphing-4-enine 1-phosphate(out) + ADP + phosphate + H(+). It carries out the reaction estrone 3-sulfate(in) + ATP + H2O = estrone 3-sulfate(out) + ADP + phosphate + H(+). The enzyme catalyses dehydroepiandrosterone 3-sulfate(in) + ATP + H2O = dehydroepiandrosterone 3-sulfate(out) + ADP + phosphate + H(+). It catalyses the reaction 4-methylumbelliferone sulfate(in) + ATP + H2O = 4-methylumbelliferone sulfate(out) + ADP + phosphate + H(+). The catalysed reaction is 5,7-dimethyl-2-methylamino-4-(3-pyridylmethyl)-1,3-benzothiazol-6-yl beta-D-glucuronate(in) + ATP + H2O = 5,7-dimethyl-2-methylamino-4-(3-pyridylmethyl)-1,3-benzothiazol-6-yl beta-D-glucuronate(out) + ADP + phosphate + H(+). It carries out the reaction 4-methylumbelliferone beta-D-glucuronate(in) + ATP + H2O = 4-methylumbelliferone beta-D-glucuronate(out) + ADP + phosphate + H(+). The enzyme catalyses 5,7-dimethyl-2-methylamino-4-(3-pyridylmethyl)-1,3-benzothiazol-6-yl sulfate(in) + ATP + H2O = 5,7-dimethyl-2-methylamino-4-(3-pyridylmethyl)-1,3-benzothiazol-6-yl sulfate(out) + ADP + phosphate + H(+). It catalyses the reaction 17beta-estradiol 17-O-(beta-D-glucuronate)(in) + ATP + H2O = 17beta-estradiol 17-O-(beta-D-glucuronate)(out) + ADP + phosphate + H(+). The catalysed reaction is methotrexate(in) + ATP + H2O = methotrexate(out) + ADP + phosphate + H(+). It carries out the reaction riboflavin(in) + ATP + H2O = riboflavin(out) + ADP + phosphate + H(+). The enzyme catalyses pheophorbide a(in) + ATP + H2O = pheophorbide a(out) + ADP + phosphate + H(+). It catalyses the reaction itaconate(in) + ATP + H2O = itaconate(out) + ADP + phosphate + H(+). Its function is as follows. Broad substrate specificity ATP-dependent transporter of the ATP-binding cassette (ABC) family that actively extrudes a wide variety of physiological compounds, dietary toxins and xenobiotics from cells. Involved in porphyrin homeostasis, mediating the export of protoporphyrin IX (PPIX) from both mitochondria to cytosol and cytosol to extracellular space, it also functions in the cellular export of heme. Also mediates the efflux of sphingosine-1-P from cells. Acts as a urate exporter functioning in both renal and extrarenal urate excretion. In kidney, it also functions as a physiological exporter of the uremic toxin indoxyl sulfate. Also involved in the excretion of steroids like estrone 3-sulfate/E1S, 3beta-sulfooxy-androst-5-en-17-one/DHEAS, and other sulfate conjugates. Mediates the secretion of the riboflavin and biotin vitamins into milk. Extrudes pheophorbide a, a phototoxic porphyrin catabolite of chlorophyll, reducing its bioavailability. Plays an important role in the exclusion of xenobiotics from the brain. It confers to cells a resistance to multiple drugs and other xenobiotics including mitoxantrone, pheophorbide, camptothecin, methotrexate, azidothymidine, and the anthracyclines daunorubicin and doxorubicin, through the control of their efflux. In placenta, it limits the penetration of drugs from the maternal plasma into the fetus. May play a role in early stem cell self-renewal by blocking differentiation. In inflammatory macrophages, exports itaconate from the cytosol to the extracellular compartment and limits the activation of TFEB-dependent lysosome biogenesis involved in antibacterial innate immune response. The polypeptide is Broad substrate specificity ATP-binding cassette transporter ABCG2 (ABCG2) (Macaca mulatta (Rhesus macaque)).